The primary structure comprises 279 residues: MALKSYKPTTPGQRGLVLIDRSELWKGRPVKTLVEGLIKTGGRNNTGRVTMWHKGGGAKRLYRIVDFKRRKFDVPAVVERIEYDPNRTAFIALVRYEDGELAYILAPQRLAVGDSVIAGAKTDVKPGNAMPFSGMPIGTIVHNVELKPGKGGQLARAAGTYAQFVGRDGGYAQIRLSSGELRMVRQECMATVGAVSNPDNSNQNFGKAGRMRHKGVRPTVRGVAMNPIDHPHGGGEGRTSGGRHPVTPWGKGTKGNRTRKSKASDKLIVRSRHAKKKGR.

The interval 224–279 (AMNPIDHPHGGGEGRTSGGRHPVTPWGKGTKGNRTRKSKASDKLIVRSRHAKKKGR) is disordered. A compositionally biased stretch (basic residues) spans 269–279 (VRSRHAKKKGR).

This sequence belongs to the universal ribosomal protein uL2 family. As to quaternary structure, part of the 50S ribosomal subunit. Forms a bridge to the 30S subunit in the 70S ribosome.

Its function is as follows. One of the primary rRNA binding proteins. Required for association of the 30S and 50S subunits to form the 70S ribosome, for tRNA binding and peptide bond formation. It has been suggested to have peptidyltransferase activity; this is somewhat controversial. Makes several contacts with the 16S rRNA in the 70S ribosome. In Cereibacter sphaeroides (strain ATCC 17025 / ATH 2.4.3) (Rhodobacter sphaeroides), this protein is Large ribosomal subunit protein uL2.